The primary structure comprises 197 residues: dTTP/UTP pyrophosphatase (197 aa).

The active-site Proton acceptor is D70.

Belongs to the Maf family. YhdE subfamily. The cofactor is a divalent metal cation.

The protein localises to the cytoplasm. It catalyses the reaction dTTP + H2O = dTMP + diphosphate + H(+). The enzyme catalyses UTP + H2O = UMP + diphosphate + H(+). Its function is as follows. Nucleoside triphosphate pyrophosphatase that hydrolyzes dTTP and UTP. May have a dual role in cell division arrest and in preventing the incorporation of modified nucleotides into cellular nucleic acids. The chain is dTTP/UTP pyrophosphatase from Methanosarcina mazei (strain ATCC BAA-159 / DSM 3647 / Goe1 / Go1 / JCM 11833 / OCM 88) (Methanosarcina frisia).